The sequence spans 416 residues: Exodeoxyribonuclease 7 large subunit (416 aa).

This sequence belongs to the XseA family. In terms of assembly, heterooligomer composed of large and small subunits.

It localises to the cytoplasm. It catalyses the reaction Exonucleolytic cleavage in either 5'- to 3'- or 3'- to 5'-direction to yield nucleoside 5'-phosphates.. Bidirectionally degrades single-stranded DNA into large acid-insoluble oligonucleotides, which are then degraded further into small acid-soluble oligonucleotides. In Nitratiruptor sp. (strain SB155-2), this protein is Exodeoxyribonuclease 7 large subunit.